The primary structure comprises 793 residues: Protocadherin beta-7 (793 aa).

The N-terminal stretch at 1-26 (MEARVERAVQKRQVLFLCVFLGMSWA) is a signal peptide. Over 27-688 (GAEPLRYFVA…DQANSLTVYL (662 aa)) the chain is Extracellular. Cadherin domains follow at residues 35 to 133 (VAEE…APVF), 138 to 242 (ISLK…APDF), 247 to 347 (YKVQ…RPEL), 352 to 451 (LTSP…APAF), and 456 to 561 (YTLF…SPFV). N-linked (GlcNAc...) asparagine glycosylation is present at Asn-169. Asn-418 and Asn-436 each carry an N-linked (GlcNAc...) asparagine glycan. Asn-567 carries an N-linked (GlcNAc...) asparagine glycan. The Cadherin 6 domain maps to 568–671 (SSAPCTEPLP…LVDGFSQPYL (104 aa)). Residues 689–709 (VVALASVSSLFLLSVLLFVAV) form a helical membrane-spanning segment. At 710–793 (RLCRRSRAAP…NRPFQNNLGF (84 aa)) the chain is on the cytoplasmic side.

The protein resides in the cell membrane. In terms of biological role, potential calcium-dependent cell-adhesion protein. May be involved in the establishment and maintenance of specific neuronal connections in the brain. The protein is Protocadherin beta-7 (PCDHB7) of Homo sapiens (Human).